We begin with the raw amino-acid sequence, 1801 residues long: U3 small nucleolar RNA-associated protein 10 (1801 aa).

The next 2 membrane-spanning stretches (helical) occupy residues 102–122 (LALVGGRLLLSPAVKAVEWLI) and 136–156 (ILTFLPYYSTPVFLNLLAILP). The HEAT 1 repeat unit spans residues 581–619 (DVDVQALLPFMLIALADPSERVRSGAVDALANIGKVVDK). 2 helical membrane passes run 939–959 (IQSGMSYLLSLTLGSLLAIVN) and 995–1015 (ALLLVAGLSVIAPELVLHSVM). HEAT repeat units lie at residues 1038-1076 (DQTIDQVVPALIQSLRHQKRDVVSGTSELLLSFTAAFEH), 1110-1148 (YSMDKAVLVLMTGLVSDADATVELSTYSKFLNLVGDSLK), 1244-1282 (TLTTIDFLDTIEALLKRPDDALRRKVLSLLATRLQQSPE), 1288-1327 (QTRMLDFLTVLVDIVQSSPDILLKHAAVTCIDRITEKYGK), and 1756-1794 (LALLPEMLPYISELMEDEDEGVEREVRKWVKQIEGVLGE).

This sequence belongs to the HEATR1/UTP10 family. In terms of assembly, component of the ribosomal small subunit (SSU) processome.

The protein resides in the nucleus. The protein localises to the nucleolus. It localises to the membrane. In terms of biological role, involved in nucleolar processing of pre-18S ribosomal RNA. Involved in ribosome biosynthesis. The protein is U3 small nucleolar RNA-associated protein 10 of Emericella nidulans (strain FGSC A4 / ATCC 38163 / CBS 112.46 / NRRL 194 / M139) (Aspergillus nidulans).